We begin with the raw amino-acid sequence, 165 residues long: Chorismate pyruvate-lyase (165 aa).

Substrate is bound by residues Met35, Arg77, Leu115, and Glu156.

The protein belongs to the UbiC family. In terms of assembly, monomer.

Its subcellular location is the cytoplasm. It carries out the reaction chorismate = 4-hydroxybenzoate + pyruvate. Its pathway is cofactor biosynthesis; ubiquinone biosynthesis. In terms of biological role, removes the pyruvyl group from chorismate, with concomitant aromatization of the ring, to provide 4-hydroxybenzoate (4HB) for the ubiquinone pathway. The sequence is that of Chorismate pyruvate-lyase from Enterobacter sp. (strain 638).